Consider the following 303-residue polypeptide: Olfactory receptor 10A2 (303 aa).

Residues 1–12 (MSFSSLPTEIQS) are Extracellular-facing. A helical transmembrane segment spans residues 13-33 (LLFLTFLTIYLVTLMGNCLII). At 34–41 (LVTLADPM) the chain is on the cytoplasmic side. A helical transmembrane segment spans residues 42 to 62 (LHSPMYFFLRNLSFLEIGFNL). At 63–86 (VIVPKMLGTLLAQDTTISFLGCAT) the chain is on the extracellular side. An intrachain disulfide couples C84 to C176. The helical transmembrane segment at 87–107 (QMYFFFFFGVAECFLLATMAY) threads the bilayer. Residues 108 to 126 (DRYVAICSPLHYPVIMNQR) lie on the Cytoplasmic side of the membrane. Residues 127-147 (TRAKLAAASWFPGFPVATVQT) form a helical membrane-spanning segment. At 148-184 (TWLFSFPFCGTNKVNHFFCDSPPVLRLVCADTALFEI) the chain is on the extracellular side. The helical transmembrane segment at 185–204 (YAIVGTILVVMIPCLLILCS) threads the bilayer. The Cytoplasmic segment spans residues 205 to 224 (YTHIAAAILKIPSAKGKNKA). A helical transmembrane segment spans residues 225–245 (FSTCSSHLLVVSLFYISLSLT). The Extracellular segment spans residues 246–258 (YFRPKSNNSPEGK). The helical transmembrane segment at 259 to 279 (KLLSLSYTVMTPMLNPIIYSL) threads the bilayer. At 280-301 (RNNEVKNALSRTVSKALALRNC) the chain is on the cytoplasmic side.

This sequence belongs to the G-protein coupled receptor 1 family.

It is found in the cell membrane. Its function is as follows. Odorant receptor. This is Olfactory receptor 10A2 (OR10A2) from Homo sapiens (Human).